The chain runs to 150 residues: Large ribosomal subunit protein bL9 (150 aa).

Belongs to the bacterial ribosomal protein bL9 family.

In terms of biological role, binds to the 23S rRNA. The polypeptide is Large ribosomal subunit protein bL9 (Verminephrobacter eiseniae (strain EF01-2)).